The chain runs to 54 residues: Conotoxin Cal6.17 (54 aa).

An N-terminal signal peptide occupies residues 1–19 (MSGTGVLLLTLLLLVTMAT). 3 disulfides stabilise this stretch: Cys-24–Cys-39, Cys-32–Cys-49, and Cys-38–Cys-53.

Expressed by the venom duct.

The protein localises to the secreted. In terms of biological role, probable neurotoxin. In Californiconus californicus (California cone), this protein is Conotoxin Cal6.17.